Here is a 141-residue protein sequence, read N- to C-terminus: Large ribosomal subunit protein uL16 (141 aa).

This sequence belongs to the universal ribosomal protein uL16 family. As to quaternary structure, part of the 50S ribosomal subunit.

In terms of biological role, binds 23S rRNA and is also seen to make contacts with the A and possibly P site tRNAs. This is Large ribosomal subunit protein uL16 from Geobacillus kaustophilus (strain HTA426).